A 301-amino-acid chain; its full sequence is uncharacterized protein (301 aa).

The next 9 membrane-spanning stretches (helical) occupy residues 1 to 21, 33 to 53, 72 to 92, 101 to 121, 124 to 144, 194 to 214, 220 to 240, 253 to 273, and 274 to 294; these read MSWI…LRII, SVLF…YVYY, AMSL…KIPW, FGII…IILI, FAWL…KTFY, VLIE…IFAI, IIYT…FCLA, LALI…IAIP, and EYVA…ASII.

The protein belongs to the TerC family.

It localises to the cell membrane. This is an uncharacterized protein from Rickettsia conorii (strain ATCC VR-613 / Malish 7).